A 164-amino-acid polypeptide reads, in one-letter code: Large ribosomal subunit protein uL10 (164 aa).

This sequence belongs to the universal ribosomal protein uL10 family. In terms of assembly, part of the ribosomal stalk of the 50S ribosomal subunit. The N-terminus interacts with L11 and the large rRNA to form the base of the stalk. The C-terminus forms an elongated spine to which L12 dimers bind in a sequential fashion forming a multimeric L10(L12)X complex.

Its function is as follows. Forms part of the ribosomal stalk, playing a central role in the interaction of the ribosome with GTP-bound translation factors. This Helicobacter pylori (strain ATCC 700392 / 26695) (Campylobacter pylori) protein is Large ribosomal subunit protein uL10 (rplJ).